A 304-amino-acid chain; its full sequence is Cytochrome c biogenesis protein CcsA (304 aa).

The next 8 membrane-spanning stretches (helical) occupy residues Leu8 to Phe28, Pro37 to Leu57, Gly63 to Leu83, Ile96 to Leu116, Val141 to Val161, Thr212 to Asn232, Thr246 to Leu263, and Val275 to Ile295.

Belongs to the CcmF/CycK/Ccl1/NrfE/CcsA family. As to quaternary structure, may interact with ccs1.

The protein localises to the cellular thylakoid membrane. Functionally, required during biogenesis of c-type cytochromes (cytochrome c6 and cytochrome f) at the step of heme attachment. In Synechococcus sp. (strain CC9902), this protein is Cytochrome c biogenesis protein CcsA.